Consider the following 673-residue polypeptide: Hemocyanin subunit C (673 aa).

Positions 1–20 are cleaved as a signal peptide; sequence MGAWKVWTFFAIALVVAVKA. Cu cation contacts are provided by H207, H211, and H237. N-linked (GlcNAc...) asparagine glycosylation is present at N323. 3 residues coordinate Cu cation: H358, H362, and H398. A disulfide bridge links C568 with C616.

This sequence belongs to the tyrosinase family. Hemocyanin subfamily. As to quaternary structure, 36-chain polymer consisting of 6 hexamers, each of which includes 4 different chains, A, B, C and D. As to expression, hemolymph.

Its subcellular location is the secreted. The protein localises to the extracellular space. In terms of biological role, hemocyanins are copper-containing oxygen carriers occurring freely dissolved in the hemolymph of many mollusks and arthropods. The polypeptide is Hemocyanin subunit C (HCC) (Scutigera coleoptrata (House centipede)).